The primary structure comprises 1024 residues: Beta-galactosidase (1024 aa).

Substrate-binding residues include asparagine 103 and aspartate 202. Aspartate 202 contributes to the Na(+) binding site. Residues glutamate 417, histidine 419, and glutamate 462 each coordinate Mg(2+). Residues glutamate 462 and 538–541 (EYAH) contribute to the substrate site. The active-site Proton donor is the glutamate 462. The active-site Nucleophile is the glutamate 538. Asparagine 598 is a binding site for Mg(2+). Na(+)-binding residues include phenylalanine 602 and asparagine 605. 2 residues coordinate substrate: asparagine 605 and tryptophan 1000.

It belongs to the glycosyl hydrolase 2 family. Homotetramer. Mg(2+) is required as a cofactor. Requires Na(+) as cofactor.

It catalyses the reaction Hydrolysis of terminal non-reducing beta-D-galactose residues in beta-D-galactosides.. This Klebsiella pneumoniae protein is Beta-galactosidase.